A 294-amino-acid polypeptide reads, in one-letter code: Foldase protein PrsA 1 (294 aa).

Residues 1 to 21 form the signal peptide; the sequence is MTKLKKVMISVIAATLLLLAG. Residue Cys-22 is the site of N-palmitoyl cysteine attachment. The S-diacylglycerol cysteine moiety is linked to residue Cys-22. The PpiC domain occupies 135–226; that stretch reads EPDITVRHIL…YGYHLIQLVK (92 aa).

It belongs to the PrsA family.

It is found in the cell membrane. It catalyses the reaction [protein]-peptidylproline (omega=180) = [protein]-peptidylproline (omega=0). Its function is as follows. Plays a major role in protein secretion by helping the post-translocational extracellular folding of several secreted proteins. The polypeptide is Foldase protein PrsA 1 (Listeria monocytogenes serotype 4b (strain F2365)).